Consider the following 112-residue polypeptide: Nucleoid-associated protein CV_1611 (112 aa).

It belongs to the YbaB/EbfC family. In terms of assembly, homodimer.

The protein localises to the cytoplasm. It localises to the nucleoid. Binds to DNA and alters its conformation. May be involved in regulation of gene expression, nucleoid organization and DNA protection. The protein is Nucleoid-associated protein CV_1611 of Chromobacterium violaceum (strain ATCC 12472 / DSM 30191 / JCM 1249 / CCUG 213 / NBRC 12614 / NCIMB 9131 / NCTC 9757 / MK).